Reading from the N-terminus, the 658-residue chain is Sulfate transporter 3.1 (658 aa).

Residues 1 to 85 (MGTEDYTFPQ…RYNLKFFKSD (85 aa)) lie on the Cytoplasmic side of the membrane. Residues 86–106 (LIAGITIASLAIPQGISYAKL) traverse the membrane as a helical segment. Over 107–108 (AN) the chain is Extracellular. The helical transmembrane segment at 109-129 (LPPILGLYSSFVPPLVYAVLG) threads the bilayer. Residues 130–133 (SSRD) lie on the Cytoplasmic side of the membrane. The chain crosses the membrane as a helical span at residues 134–154 (LAVGTVAVASLLTGAMLSKEV). The Extracellular segment spans residues 155–163 (DAEKDPKLY). The helical transmembrane segment at 164 to 184 (LHLAFTATFFAGVLEASLGIF) threads the bilayer. Position 185 (R185) is a topological domain, cytoplasmic. A helical transmembrane segment spans residues 186–206 (LGFIVDFLSHATIVGFMGGAA). The Extracellular portion of the chain corresponds to 207-245 (TVVSLQQLKGIFGLKHFTDSTDVISVMRSVFSQTHEWRW). A helical membrane pass occupies residues 246–266 (ESGVLGCGFLFFLLSTRYFSI). The Cytoplasmic portion of the chain corresponds to 267-271 (KKPKF). A helical membrane pass occupies residues 272-292 (FWVAAMAPLTSVILGSLLVYF). The Extracellular segment spans residues 293–332 (THAERHGVQVIGDLKKGLNPLSGSDLIFTSPYMSTAVKTG). Residues 333–353 (LITGIIALAEGVAVGRSFAMF) form a helical membrane-spanning segment. The Cytoplasmic segment spans residues 354 to 363 (KNYNIDGNKE). Residues 364–384 (MIAFGMMNIVGSFTSCYLTTG) form a helical membrane-spanning segment. At 385 to 398 (PFSRSAVNYNAGCK) the chain is on the extracellular side. A helical transmembrane segment spans residues 399–419 (TAMSNIVMAIAVMFTLLFLTP). Over 420–425 (LFHYTP) the chain is Cytoplasmic. A helical membrane pass occupies residues 426–446 (LVVLSAIIISAMLGLIDYQAA). The Extracellular portion of the chain corresponds to 447 to 464 (IHLWKVDKFDFLVCMSAY). The chain crosses the membrane as a helical span at residues 465-485 (VGVVFGSVEIGLVVAVAISIA). Topologically, residues 486-658 (RLLLFVSRPK…ASKNEPWNNV (173 aa)) are cytoplasmic. The 125-residue stretch at 513 to 637 (QYPSSRTVPG…LTVGEAVEAC (125 aa)) folds into the STAS domain.

It belongs to the SLC26A/SulP transporter (TC 2.A.53) family. As to expression, expressed only in leaves.

It localises to the membrane. Its function is as follows. H(+)/sulfate cotransporter that may play a role in the regulation of sulfate assimilation. In Arabidopsis thaliana (Mouse-ear cress), this protein is Sulfate transporter 3.1 (SULTR3;1).